We begin with the raw amino-acid sequence, 256 residues long: Protein TV0584 (256 aa).

Belongs to the CinA family.

This is Protein TV0584 from Thermoplasma volcanium (strain ATCC 51530 / DSM 4299 / JCM 9571 / NBRC 15438 / GSS1).